The sequence spans 330 residues: Ketol-acid reductoisomerase (NADP(+)) (330 aa).

The region spanning 1-181 is the KARI N-terminal Rossmann domain; the sequence is MKVYYEQDAT…GGARSGVIET (181 aa). Residues 24–27, Arg-47, and 82–85 contribute to the NADP(+) site; these read YGSQ and DQVQ. Residue His-107 is part of the active site. Gly-133 lines the NADP(+) pocket. One can recognise a KARI C-terminal knotted domain in the interval 182–327; the sequence is TFKEETETDL…GKLRGMMPWL (146 aa). Positions 190, 194, 226, and 230 each coordinate Mg(2+). Position 251 (Ser-251) interacts with substrate.

It belongs to the ketol-acid reductoisomerase family. Mg(2+) is required as a cofactor.

It carries out the reaction (2R)-2,3-dihydroxy-3-methylbutanoate + NADP(+) = (2S)-2-acetolactate + NADPH + H(+). The catalysed reaction is (2R,3R)-2,3-dihydroxy-3-methylpentanoate + NADP(+) = (S)-2-ethyl-2-hydroxy-3-oxobutanoate + NADPH + H(+). It participates in amino-acid biosynthesis; L-isoleucine biosynthesis; L-isoleucine from 2-oxobutanoate: step 2/4. Its pathway is amino-acid biosynthesis; L-valine biosynthesis; L-valine from pyruvate: step 2/4. In terms of biological role, involved in the biosynthesis of branched-chain amino acids (BCAA). Catalyzes an alkyl-migration followed by a ketol-acid reduction of (S)-2-acetolactate (S2AL) to yield (R)-2,3-dihydroxy-isovalerate. In the isomerase reaction, S2AL is rearranged via a Mg-dependent methyl migration to produce 3-hydroxy-3-methyl-2-ketobutyrate (HMKB). In the reductase reaction, this 2-ketoacid undergoes a metal-dependent reduction by NADPH to yield (R)-2,3-dihydroxy-isovalerate. In Nitratidesulfovibrio vulgaris (strain DSM 19637 / Miyazaki F) (Desulfovibrio vulgaris), this protein is Ketol-acid reductoisomerase (NADP(+)).